Consider the following 121-residue polypeptide: Insulin-like peptide 01 (121 aa).

Positions 1–24 (MDSFTRASLITFLILLTLTSLVFS) are cleaved as a signal peptide. A propeptide spanning residues 25-45 (NGCMMRGGCFKTSEDAHRLIM) is cleaved from the precursor. 3 disulfides stabilise this stretch: Cys-52–Cys-107, Cys-64–Cys-120, and Cys-106–Cys-111. The propeptide at 69 to 97 (RRRKRDLRRKLGIVMDRKESHKFLRRRKR) is c peptide.

The protein belongs to the insulin family.

The protein resides in the secreted. In terms of biological role, insulin decreases blood glucose concentration. May have evolved to activate insulin receptors (INSR) in vertebrates. Molecular docking studies reveals unique interaction with the human insulin receptor. In vivo, insulin-like peptide injection reduces blood glucose levels in two models of zebrafish diabetes (streptozotocin- and glucose-induced). Also shorter swimming distance of zebrafish larvae, an effect which is not observed with human insulin. The protein is Insulin-like peptide 01 of Exaiptasia diaphana (Tropical sea anemone).